Reading from the N-terminus, the 105-residue chain is U2-lycotoxin-Ls1a (105 aa).

Residues 1–17 (MIKYVLISALLVVAVYS) form the signal peptide. A propeptide spanning residues 18 to 41 (FTIEDNEDALLEEAEDELDTEEER) is cleaved from the precursor. 4 disulfide bridges follow: cysteine 51-cysteine 67, cysteine 58-cysteine 97, cysteine 60-cysteine 83, and cysteine 69-cysteine 81.

It belongs to the neurotoxin 04 (omega-agtx) family. 01 (type I omega-agtx) subfamily. In terms of tissue distribution, expressed by the venom gland.

Its subcellular location is the secreted. Insecticidal to house crickets. It induces an excitatory slow-onset impact that leads to irreversible spastic paralysis. It also modifies human voltage-gated potassium channel Kv1.5/KCNA5. Most likely, it binds to the voltage-sensing domain of the channel, suggesting it does not block the pore but prevents its opening at physiological membrane potentials. The recombinant peptide binds to the channel in an irreversible manner and slows down the hKv1.5 current activation kinetics. It is not toxic to mice, when intracranially injected (at 0.5 ug/g mouse). The sequence is that of U2-lycotoxin-Ls1a from Lycosa singoriensis (Wolf spider).